The following is a 300-amino-acid chain: Ribosomal protein L11 methyltransferase (300 aa).

4 residues coordinate S-adenosyl-L-methionine: T152, G173, D195, and N234.

Belongs to the methyltransferase superfamily. PrmA family.

It localises to the cytoplasm. The enzyme catalyses L-lysyl-[protein] + 3 S-adenosyl-L-methionine = N(6),N(6),N(6)-trimethyl-L-lysyl-[protein] + 3 S-adenosyl-L-homocysteine + 3 H(+). Methylates ribosomal protein L11. The sequence is that of Ribosomal protein L11 methyltransferase from Burkholderia ambifaria (strain ATCC BAA-244 / DSM 16087 / CCUG 44356 / LMG 19182 / AMMD) (Burkholderia cepacia (strain AMMD)).